The chain runs to 298 residues: Fe(II)/2-oxoglutarate-dependent dioxygenase nvfF (298 aa).

Positions 137, 139, and 212 each coordinate Fe cation.

This sequence belongs to the PhyH family. In terms of assembly, homodimer. The cofactor is Fe cation.

It carries out the reaction fumigatonoid C + 2-oxoglutarate + O2 = novofumigatonin + succinate + CO2 + H2O. Its pathway is secondary metabolite biosynthesis; terpenoid biosynthesis. Its function is as follows. Fe(II)/2-oxoglutarate-dependent dioxygenase; part of the gene cluster that mediates the biosynthesis of novofumigatonin, a heavily oxygenated meroterpenoid containing a unique orthoester moiety. The first step of the pathway is the synthesis of 3,5-dimethylorsellinic acid (DMOA) by the polyketide synthase nvfA via condensation of one acetyl-CoA starter unit with 3 malonyl-CoA units and 2 methylations. DMOA is then converted to farnesyl-DMOA by the farnesyltransferase nvfB. Epoxydation by FAD-dependent monooxygenase nvfK, followed by a protonation-initiated cyclization catalyzed by the terpene cyclase nvfL leads to the production of asnavolin H. The short chain dehydrogenase nvfC then as a 3-OH dehydrogenase of asnovolin H to yield chemesin D. There are two branches to synthesize asnovolin A from chemesin D. In one branch, chemesin D undergoes Baeyer-Villiger oxidation by nvfH, methylation by nvfJ, and enoyl reduction by the nvfM D enoylreductase that reduces the double bond between C-5'and C-6', to form respectively asnovolin I, asnovolin K, and asnovolin A. In the other branch, the methylation precedes the Baeyer-Villiger oxidation and the enoyl reduction to yield asnovolin A via the asnovolin J intermediate. Asnovolin A is further converted to fumigatonoid A by the Fe(II)/2-oxoglutarate-dependent dioxygenase nvfI that catalyzes an endoperoxidation reaction. The alpha/beta hydrolase nvfD then acts as an epimerase that converts fumigatonoid A to its C-5' epimer, which then undergoes spontaneous or nvfD-catalyzed lactonization. The following step utilizes the ketoreductase nvfG to produce fumigatonoid B. The dioxygenase nvfE further converts fumigatonoid B into fumigatonoid C. Finally the Fe(II)/2-oxoglutarate-dependent dioxygenase nvfF catalyzes two rounds of oxidation to transform fumigatonoid C into the end product, novofumigatonin A. This chain is Fe(II)/2-oxoglutarate-dependent dioxygenase nvfF, found in Aspergillus novofumigatus (strain IBT 16806).